Consider the following 289-residue polypeptide: Rhodopsin (289 aa).

Topologically, residues 1–7 (YLVSPAA) are extracellular. A helical membrane pass occupies residues 8-32 (YAALGAYMFLLILIGFPVNFLTLYV). Over 33–44 (TLEHKKLRTPLN) the chain is Cytoplasmic. The helical transmembrane segment at 45–67 (YILLNLAVADLFMVLGGFTTTMY) threads the bilayer. At 68 to 81 (TSMHGYFVLGRLGC) the chain is on the extracellular side. Cys81 and Cys158 are joined by a disulfide. The chain crosses the membrane as a helical span at residues 82-104 (NLEGFFATLGGEIALWSLVVLAI). Residues 105–107 (ERW) carry the 'Ionic lock' involved in activated form stabilization motif. At 105 to 123 (ERWIVVCKPISKFRFTEDN) the chain is on the cytoplasmic side. A helical transmembrane segment spans residues 124–144 (AIMGLAFSWVMALACAVPPLV). The Extracellular segment spans residues 145 to 173 (GWLRYIPEGMQCTCGVDYYTRAEGFDNES). Asn171 carries an N-linked (GlcNAc...) asparagine glycan. The chain crosses the membrane as a helical span at residues 174–195 (FVIYMFIVHFLIPLSVIFFCYG). Residues 196-223 (RLLCAVKEAAAAQQESETTQRAEKEVSR) are Cytoplasmic-facing. A helical transmembrane segment spans residues 224–245 (MVVIMVIGFLVCWLPYASVAWW). Topologically, residues 246–257 (IFCNQGSDFGPI) are extracellular. Residues 258–279 (FMTLPSFFAKRPAIYNPMIYIC) form a helical membrane-spanning segment. Residue Lys267 is modified to N6-(retinylidene)lysine. At 280 to 289 (MNKQFRHCMI) the chain is on the cytoplasmic side.

This sequence belongs to the G-protein coupled receptor 1 family. Opsin subfamily. In terms of processing, phosphorylated on some or all of the serine and threonine residues present in the C-terminal region. Post-translationally, contains one covalently linked retinal chromophore.

The protein localises to the membrane. The protein resides in the cell projection. It localises to the cilium. It is found in the photoreceptor outer segment. In terms of biological role, photoreceptor required for image-forming vision at low light intensity. While most salt water fish species use retinal as chromophore, most freshwater fish use 3-dehydroretinal, or a mixture of retinal and 3-dehydroretinal. Light-induced isomerization of 11-cis to all-trans retinal triggers a conformational change that activates signaling via G-proteins. Subsequent receptor phosphorylation mediates displacement of the bound G-protein alpha subunit by arrestin and terminates signaling. The polypeptide is Rhodopsin (rho) (Batrachocottus nikolskii (Fat sculpin)).